Here is a 715-residue protein sequence, read N- to C-terminus: Phosphoribosylformylglycinamidine synthase subunit PurL (715 aa).

His-33 is a catalytic residue. Tyr-36 contacts ATP. Glu-77 provides a ligand contact to Mg(2+). Residues 78–81 and Arg-100 each bind substrate; that span reads SHNH. Catalysis depends on His-79, which acts as the Proton acceptor. Asp-101 provides a ligand contact to Mg(2+). Gln-225 is a binding site for substrate. A Mg(2+)-binding site is contributed by Asp-253. A substrate-binding site is contributed by 297-299; the sequence is ESQ. The ATP site is built by Asn-476 and Gly-513. Asn-514 is a Mg(2+) binding site. Ser-516 contributes to the substrate binding site.

Belongs to the FGAMS family. As to quaternary structure, monomer. Part of the FGAM synthase complex composed of 1 PurL, 1 PurQ and 2 PurS subunits.

The protein resides in the cytoplasm. The enzyme catalyses N(2)-formyl-N(1)-(5-phospho-beta-D-ribosyl)glycinamide + L-glutamine + ATP + H2O = 2-formamido-N(1)-(5-O-phospho-beta-D-ribosyl)acetamidine + L-glutamate + ADP + phosphate + H(+). The protein operates within purine metabolism; IMP biosynthesis via de novo pathway; 5-amino-1-(5-phospho-D-ribosyl)imidazole from N(2)-formyl-N(1)-(5-phospho-D-ribosyl)glycinamide: step 1/2. Its function is as follows. Part of the phosphoribosylformylglycinamidine synthase complex involved in the purines biosynthetic pathway. Catalyzes the ATP-dependent conversion of formylglycinamide ribonucleotide (FGAR) and glutamine to yield formylglycinamidine ribonucleotide (FGAM) and glutamate. The FGAM synthase complex is composed of three subunits. PurQ produces an ammonia molecule by converting glutamine to glutamate. PurL transfers the ammonia molecule to FGAR to form FGAM in an ATP-dependent manner. PurS interacts with PurQ and PurL and is thought to assist in the transfer of the ammonia molecule from PurQ to PurL. The sequence is that of Phosphoribosylformylglycinamidine synthase subunit PurL from Methanosarcina barkeri (strain Fusaro / DSM 804).